The chain runs to 434 residues: UDP-N-acetylmuramate--L-alanine ligase (434 aa).

108-114 (GSHGKTT) is an ATP binding site.

It belongs to the MurCDEF family.

Its subcellular location is the cytoplasm. The enzyme catalyses UDP-N-acetyl-alpha-D-muramate + L-alanine + ATP = UDP-N-acetyl-alpha-D-muramoyl-L-alanine + ADP + phosphate + H(+). Its pathway is cell wall biogenesis; peptidoglycan biosynthesis. In terms of biological role, cell wall formation. This is UDP-N-acetylmuramate--L-alanine ligase from Geobacillus thermodenitrificans (strain NG80-2).